Reading from the N-terminus, the 253-residue chain is tRNA (guanine-N(1)-)-methyltransferase (253 aa).

S-adenosyl-L-methionine-binding positions include Gly116 and 136-141 (VGDYIL).

The protein belongs to the RNA methyltransferase TrmD family. In terms of assembly, homodimer.

It localises to the cytoplasm. It catalyses the reaction guanosine(37) in tRNA + S-adenosyl-L-methionine = N(1)-methylguanosine(37) in tRNA + S-adenosyl-L-homocysteine + H(+). In terms of biological role, specifically methylates guanosine-37 in various tRNAs. The polypeptide is tRNA (guanine-N(1)-)-methyltransferase (Colwellia psychrerythraea (strain 34H / ATCC BAA-681) (Vibrio psychroerythus)).